Here is a 478-residue protein sequence, read N- to C-terminus: Sugar transporter ERD6-like 15 (478 aa).

The next 12 membrane-spanning stretches (helical) occupy residues 31 to 51, 67 to 87, 106 to 126, 129 to 149, 161 to 181, 185 to 205, 267 to 287, 305 to 325, 333 to 353, 366 to 386, 406 to 426, and 432 to 452; these read FVLAFIVGSCGAFAFGCIIGY, IADYSLFGSILTVGLILGALI, ILFVIGWFAIAFAKGVWLLDL, LLQGISIGISVYLGPVYITEI, FAQLFAGVGISVFYALGTIVA, LAILGCIPSLMVLPLLFFIPE, AFSLTIGVVLIALPQLGGLNG, FGFISTSVVQMFGGILGTVLV, LLLVSQAGMFLGCLTTAISFF, VLALFSVMVYFGSYGSGMGSI, MCNLVSSISAWLVAYSFSYLL, and GTFLMFATVAGLGFVFIAKLV.

The protein belongs to the major facilitator superfamily. Sugar transporter (TC 2.A.1.1) family.

The protein resides in the membrane. Sugar transporter. The sequence is that of Sugar transporter ERD6-like 15 from Arabidopsis thaliana (Mouse-ear cress).